The following is a 325-amino-acid chain: GMP reductase (325 aa).

C173 (thioimidate intermediate) is an active-site residue. 202–225 (IIADGGIRSHGDIAKSVRFGATMV) contacts NADP(+).

The protein belongs to the IMPDH/GMPR family. GuaC type 2 subfamily.

The catalysed reaction is IMP + NH4(+) + NADP(+) = GMP + NADPH + 2 H(+). In terms of biological role, catalyzes the irreversible NADPH-dependent deamination of GMP to IMP. It functions in the conversion of nucleobase, nucleoside and nucleotide derivatives of G to A nucleotides, and in maintaining the intracellular balance of A and G nucleotides. This is GMP reductase from Delftia acidovorans (strain DSM 14801 / SPH-1).